A 154-amino-acid polypeptide reads, in one-letter code: Protein phosphatase 1 regulatory subunit 27 (154 aa).

2 ANK repeats span residues 63 to 92 and 96 to 125; these read SGLA…DIHQ and AGWT…DRDA.

Interacts with DYSF and PPP1CA.

Functionally, inhibits phosphatase activity of protein phosphatase 1 (PP1) complexes. The chain is Protein phosphatase 1 regulatory subunit 27 (PPP1R27) from Homo sapiens (Human).